The following is a 350-amino-acid chain: Protein RecA (350 aa).

67-74 (GPESSGKT) contributes to the ATP binding site.

The protein belongs to the RecA family.

It is found in the cytoplasm. Functionally, can catalyze the hydrolysis of ATP in the presence of single-stranded DNA, the ATP-dependent uptake of single-stranded DNA by duplex DNA, and the ATP-dependent hybridization of homologous single-stranded DNAs. It interacts with LexA causing its activation and leading to its autocatalytic cleavage. This chain is Protein RecA, found in Wolinella succinogenes (strain ATCC 29543 / DSM 1740 / CCUG 13145 / JCM 31913 / LMG 7466 / NCTC 11488 / FDC 602W) (Vibrio succinogenes).